Here is a 154-residue protein sequence, read N- to C-terminus: 3-hydroxyacyl-[acyl-carrier-protein] dehydratase FabZ (154 aa).

Residue His-58 is part of the active site.

It belongs to the thioester dehydratase family. FabZ subfamily.

The protein resides in the cytoplasm. It catalyses the reaction a (3R)-hydroxyacyl-[ACP] = a (2E)-enoyl-[ACP] + H2O. Involved in unsaturated fatty acids biosynthesis. Catalyzes the dehydration of short chain beta-hydroxyacyl-ACPs and long chain saturated and unsaturated beta-hydroxyacyl-ACPs. The polypeptide is 3-hydroxyacyl-[acyl-carrier-protein] dehydratase FabZ (Protochlamydia amoebophila (strain UWE25)).